Here is a 556-residue protein sequence, read N- to C-terminus: Formate--tetrahydrofolate ligase (556 aa).

65–72 is an ATP binding site; it reads TPAGEGKS.

It belongs to the formate--tetrahydrofolate ligase family.

It carries out the reaction (6S)-5,6,7,8-tetrahydrofolate + formate + ATP = (6R)-10-formyltetrahydrofolate + ADP + phosphate. It participates in one-carbon metabolism; tetrahydrofolate interconversion. The chain is Formate--tetrahydrofolate ligase from Clostridium acetobutylicum (strain ATCC 824 / DSM 792 / JCM 1419 / IAM 19013 / LMG 5710 / NBRC 13948 / NRRL B-527 / VKM B-1787 / 2291 / W).